Reading from the N-terminus, the 243-residue chain is Triosephosphate isomerase (243 aa).

9 to 11 contacts substrate; the sequence is NWK. His-96 acts as the Electrophile in catalysis. Residue Glu-165 is the Proton acceptor of the active site. Residues Gly-171, Ser-204, and 225–226 contribute to the substrate site; that span reads GG.

This sequence belongs to the triosephosphate isomerase family. Homodimer.

The protein localises to the cytoplasm. The catalysed reaction is D-glyceraldehyde 3-phosphate = dihydroxyacetone phosphate. It participates in carbohydrate biosynthesis; gluconeogenesis. Its pathway is carbohydrate degradation; glycolysis; D-glyceraldehyde 3-phosphate from glycerone phosphate: step 1/1. In terms of biological role, involved in the gluconeogenesis. Catalyzes stereospecifically the conversion of dihydroxyacetone phosphate (DHAP) to D-glyceraldehyde-3-phosphate (G3P). This is Triosephosphate isomerase from Synechococcus sp. (strain CC9902).